The following is a 46-amino-acid chain: Protein PsbN (46 aa).

Residues 7-27 (ALSVALGVMAVVLGLTGFGVY) traverse the membrane as a helical segment.

The protein belongs to the PsbN family.

It is found in the cellular thylakoid membrane. Its function is as follows. May play a role in photosystem I and II biogenesis. In Synechococcus sp. (strain CC9902), this protein is Protein PsbN.